A 230-amino-acid chain; its full sequence is Aquaporin Z (230 aa).

2 helical membrane-spanning segments follow: residues 9–29 (AELI…VLAA) and 35–55 (IGVL…AFAI). An NPA 1 motif is present at residues 64 to 66 (NPA). 3 helical membrane passes run 83–103 (LPYV…IYLI), 131–151 (LGAG…VIMG), and 160–180 (GFAP…SIPV). Residues 186–188 (NPA) carry the NPA 2 motif. Residues 194–214 (ALFVGGWALQQLWLFWVAPLI) traverse the membrane as a helical segment.

This sequence belongs to the MIP/aquaporin (TC 1.A.8) family. As to quaternary structure, homotetramer.

The protein localises to the cell inner membrane. It catalyses the reaction H2O(in) = H2O(out). Channel that permits osmotically driven movement of water in both directions. It is involved in the osmoregulation and in the maintenance of cell turgor during volume expansion in rapidly growing cells. It mediates rapid entry or exit of water in response to abrupt changes in osmolarity. The chain is Aquaporin Z from Pseudomonas putida (strain ATCC 47054 / DSM 6125 / CFBP 8728 / NCIMB 11950 / KT2440).